Consider the following 1230-residue polypeptide: MSALCWGRGAAGLKRALRPCGRPGLPGKEGTAGGVCGPRRSSSASPQEQDQDRRKDWGHVELLEVLQARVRQLQAESVSEVVVNRVDVARLPECGSGDGSLQPPRKVQMGAKDATPVPCGRWAKILEKDKRTQQMRMQRLKAKLQMPFQSGEFKALTRRLQVEPRLLSKQMAGCLEDCTRQAPESPWEEQLARLLQEAPGKLSLDVEQAPSGQHSQAQLSGQQQRLLAFFKCCLLTDQLPLAHHLLVVHHGQRQKRKLLTLDMYNAVMLGWARQGAFKELVYVLFMVKDAGLTPDLLSYAAALQCMGRQDQDAGTIERCLEQMSQEGLKLQALFTAVLLSEEDRATVLKAVHKVKPTFSLPPQLPPPVNTSKLLRDVYAKDGRVSYPKLHLPLKTLQCLFEKQLHMELASRVCVVSVEKPTLPSKEVKHARKTLKTLRDQWEKALCRALRETKNRLEREVYEGRFSLYPFLCLLDEREVVRMLLQVLQALPAQGESFTTLARELSARTFSRHVVQRQRVSGQVQALQNHYRKYLCLLASDAEVPEPCLPRQYWEELGAPEALREQPWPLPVQMELGKLLAEMLVQATQMPCSLDKPHRSSRLVPVLYHVYSFRNVQQIGILKPHPAYVQLLEKAAEPTLTFEAVDVPMLCPPLPWTSPHSGAFLLSPTKLMRTVEGATQHQELLETCPPTALHGALDALTQLGNCAWRVNGRVLDLVLQLFQAKGCPQLGVPAPPSEAPQPPEAHLPHSAAPARKAELRRELAHCQKVAREMHSLRAEALYRLSLAQHLRDRVFWLPHNMDFRGRTYPCPPHFNHLGSDVARALLEFAQGRPLGPHGLDWLKIHLVNLTGLKKREPLRKRLAFAEEVMDDILDSADQPLTGRKWWMGAEEPWQTLACCMEVANAVRASDPAAYVSHLPVHQDGSCNGLQHYAALGRDSVGAASVNLEPSDVPQDVYSGVAAQVEVFRRQDAQRGMRVAQVLEGFITRKVVKQTVMTVVYGVTRYGGRLQIEKRLRELSDFPQEFVWEASHYLVRQVFKSLQEMFSGTRAIQHWLTESARLISHMGSVVEWVTPLGVPVIQPYRLDSKVKQIGGGIQSITYTHNGDISRKPNTRKQKNGFPPNFIHSLDSSHMMLTALHCYRKGLTFVSVHDCYWTHAADVSVMNQVCREQFVRLHSEPILQDLSRFLVKRFCSEPQKILEASQLKETLQAVPKPGAFDLEQVKRSTYFFS.

The N-terminal 41 residues, 1–41 (MSALCWGRGAAGLKRALRPCGRPGLPGKEGTAGGVCGPRRS), are a transit peptide targeting the mitochondrion. Disordered stretches follow at residues 18–55 (RPCGRPGLPGKEGTAGGVCGPRRSSSASPQEQDQDRRK), 95–115 (GSGDGSLQPPRKVQMGAKDAT), and 731–750 (VPAPPSEAPQPPEAHLPHSA). The span at 732 to 744 (PAPPSEAPQPPEA) shows a compositional bias: pro residues. Residues 802-1230 (FRGRTYPCPP…QVKRSTYFFS (429 aa)) are mediates interaction with TEFM. Residues aspartate 922, lysine 991, and aspartate 1151 contribute to the active site.

It belongs to the phage and mitochondrial RNA polymerase family. In terms of assembly, homodimer. Component of the mitochondrial transcription initiation complex, composed at least of TFB2M, TFAM and POLRMT. In this complex TFAM recruits POLRMT to the promoter whereas TFB2M induces structural changes in POLRMT to enable promoter opening and trapping of the DNA non-template strand. Upon metabolic stress, forms a complex composed of FOXO3, SIRT3 and mitochondrial RNA polymerase POLRMT; the complex is recruited to mtDNA in a SIRT3-dependent manner. Also forms a complex composed of FOXO3, SIRT3, TFAM and POLRMT. Interacts with TFB1M and TFB2M, leading to the stimulation of transcription. Interacts with TEFM. Interacts with MTRES1.

It is found in the mitochondrion. It carries out the reaction RNA(n) + a ribonucleoside 5'-triphosphate = RNA(n+1) + diphosphate. DNA-dependent RNA polymerase catalyzes the transcription of mitochondrial DNA into RNA using the four ribonucleoside triphosphates as substrates. Component of the mitochondrial transcription initiation complex, composed at least of TFB2M, TFAM and POLRMT that is required for basal transcription of mitochondrial DNA. In this complex, TFAM recruits POLRMT to a specific promoter whereas TFB2M induces structural changes in POLRMT to enable promoter opening and trapping of the DNA non-template strand. Has DNA primase activity. Catalyzes the synthesis of short RNA primers that are necessary for the initiation of lagging-strand DNA synthesis from the origin of light-strand DNA replication (OriL). This is DNA-directed RNA polymerase, mitochondrial from Homo sapiens (Human).